The sequence spans 88 residues: MDPPNSLQQGIRFGFHSSSFVENMEGSQDEDNLRLLASAASGSSRDTETPTDHASGSAGGAAGGQSESRPGPSGGGVADLFPELRRLP.

The disordered stretch occupies residues 23–88 (NMEGSQDEDN…DLFPELRRLP (66 aa)). Residues 34–44 (RLLASAASGSS) are compositionally biased toward low complexity.

The polypeptide is Early E1B 9 kDa protein (Homo sapiens (Human)).